We begin with the raw amino-acid sequence, 310 residues long: MARRKKGDAVSGWLCLDKPYDLTSTTAVSRVRRAFNAQKGGHAGTLDPLATGILPIALGEATKTVPFLMDADKAYRFTIAWGRDTTTLDREGETTGTSDVRPTREQVEAALPAFIGEVDQIPPNFSAIKVDGERAYDLARDGVEFELPTRKVSIFDLKVVDQPDADHVTLTMECGKGTYVRAVVRDLAKALGTCGHVADLRRTRVGGFSEASAIALETLENLSYEARLSEALLPVETALDDIPALAVTDEDAFRLAQGRAIVLLPRQVETLKAELPPGDRTVSAMSGDRLVALCEMRAGKLNPVRVFQLT.

Catalysis depends on D47, which acts as the Nucleophile.

This sequence belongs to the pseudouridine synthase TruB family. Type 1 subfamily.

The catalysed reaction is uridine(55) in tRNA = pseudouridine(55) in tRNA. Functionally, responsible for synthesis of pseudouridine from uracil-55 in the psi GC loop of transfer RNAs. In Caulobacter vibrioides (strain ATCC 19089 / CIP 103742 / CB 15) (Caulobacter crescentus), this protein is tRNA pseudouridine synthase B.